Reading from the N-terminus, the 142-residue chain is Large ribosomal subunit protein uL23 (142 aa).

This sequence belongs to the universal ribosomal protein uL23 family.

In Kluyveromyces lactis (strain ATCC 8585 / CBS 2359 / DSM 70799 / NBRC 1267 / NRRL Y-1140 / WM37) (Yeast), this protein is Large ribosomal subunit protein uL23 (RPL25).